The sequence spans 91 residues: M-myrmeciitoxin-Mb3a (91 aa).

An N-terminal signal peptide occupies residues 1–21 (MKLSCLSLALAIILILAIVHS). The propeptide occupies 22–54 (PNMEVKALADPEADAFGEANAFGEADAFAEANA).

In terms of assembly, homodimer; disulfide-linked. In terms of tissue distribution, expressed by the venom gland and reservoir.

It localises to the secreted. Its function is as follows. Causes a significant and dose-dependent histamine release, probably by influencing the signal transduction of mast cells through a non-IgE-mediated pathway. This peptide does not have cytotoxic activities. The polypeptide is M-myrmeciitoxin-Mb3a (Myrmecia banksi (Jack jumper ant)).